The following is a 215-amino-acid chain: Uracil phosphoribosyltransferase (215 aa).

5-phospho-alpha-D-ribose 1-diphosphate is bound by residues arginine 77, arginine 102, and 129–137; that span reads DPMLATGGS. Uracil is bound by residues isoleucine 193 and 198 to 200; that span reads GDA. Aspartate 199 is a 5-phospho-alpha-D-ribose 1-diphosphate binding site.

Belongs to the UPRTase family. It depends on Mg(2+) as a cofactor.

It catalyses the reaction UMP + diphosphate = 5-phospho-alpha-D-ribose 1-diphosphate + uracil. Its pathway is pyrimidine metabolism; UMP biosynthesis via salvage pathway; UMP from uracil: step 1/1. Its activity is regulated as follows. Allosterically activated by GTP. Catalyzes the conversion of uracil and 5-phospho-alpha-D-ribose 1-diphosphate (PRPP) to UMP and diphosphate. The sequence is that of Uracil phosphoribosyltransferase from Corynebacterium urealyticum (strain ATCC 43042 / DSM 7109).